Here is a 259-residue protein sequence, read N- to C-terminus: Ribonuclease HII (259 aa).

In terms of domain architecture, RNase H type-2 spans 70–258 (TLIVGIDEVG…VKSLVLGKKE (189 aa)). A divalent metal cation contacts are provided by Asp-76, Glu-77, and Asp-168.

The protein belongs to the RNase HII family. Requires Mn(2+) as cofactor. Mg(2+) is required as a cofactor.

It is found in the cytoplasm. The catalysed reaction is Endonucleolytic cleavage to 5'-phosphomonoester.. Endonuclease that specifically degrades the RNA of RNA-DNA hybrids. The sequence is that of Ribonuclease HII from Streptococcus pneumoniae serotype 2 (strain D39 / NCTC 7466).